Consider the following 95-residue polypeptide: Small ribosomal subunit protein bS6 (95 aa).

Belongs to the bacterial ribosomal protein bS6 family.

Its function is as follows. Binds together with bS18 to 16S ribosomal RNA. This Corynebacterium jeikeium (strain K411) protein is Small ribosomal subunit protein bS6.